Consider the following 227-residue polypeptide: N-acetyltransferase family 8 member 7 (227 aa).

2 consecutive transmembrane segments (helical) span residues 36–56 (MLLL…LFLA) and 58–78 (GSWL…WFLA). Positions 61-220 (LLVLLSILTL…PMINLKYSLT (160 aa)) constitute an N-acetyltransferase domain.

The protein belongs to the camello family.

It is found in the membrane. It catalyses the reaction L-lysyl-[protein] + acetyl-CoA = N(6)-acetyl-L-lysyl-[protein] + CoA + H(+). Has histone acetyltransferase activity in vitro, with specificity for histone H4. This Mus musculus (Mouse) protein is N-acetyltransferase family 8 member 7.